We begin with the raw amino-acid sequence, 261 residues long: Claudin-18 (261 aa).

Residues M1 to C6 are Cytoplasmic-facing. A helical transmembrane segment spans residues Q7–M27. Topologically, residues D28 to R80 are extracellular. Residues A81–L101 form a helical membrane-spanning segment. Residues K102–G122 lie on the Cytoplasmic side of the membrane. A helical transmembrane segment spans residues I123–L143. At V144–A173 the chain is on the extracellular side. The chain crosses the membrane as a helical span at residues A174–I194. The Cytoplasmic portion of the chain corresponds to A195–V261. A required for role in regulation of RANKL-induced osteoclast differentiation region spans residues A195–V261. At S214 the chain carries Phosphoserine. The interval D242 to V261 is disordered.

This sequence belongs to the claudin family. As to quaternary structure, interacts with TJP2/ZO-2. Interacts with TJP1/ZO-1. Interacts with YAP1 (phosphorylated); the interaction sequesters YAP1 away from the nucleus and thereby restricts transcription of YAP1 target genes. Interacts with CLDN19. Expressed in the lung (at protein level).

Its subcellular location is the cell junction. The protein resides in the tight junction. It localises to the cell membrane. Its function is as follows. Involved in alveolar fluid homeostasis via regulation of alveolar epithelial tight junction composition and therefore ion transport and solute permeability, potentially via downstream regulation of the actin cytoskeleton organization and beta-2-adrenergic signaling. Required for lung alveolarization and maintenance of the paracellular alveolar epithelial barrier. Acts to maintain epithelial progenitor cell proliferation and organ size, via regulation of YAP1 localization away from the nucleus and thereby restriction of YAP1 target gene transcription. Acts as a negative regulator of RANKL-induced osteoclast differentiation, potentially via relocation of TJP2/ZO-2 away from the nucleus, subsequently involved in bone resorption in response to calcium deficiency. Mediates the osteoprotective effects of estrogen, potentially via acting downstream of estrogen signaling independently of RANKL signaling pathways. In terms of biological role, required for the formation of the gastric paracellular barrier via its role in tight junction formation, thereby involved in the response to gastric acidification. This Rattus norvegicus (Rat) protein is Claudin-18.